Here is a 238-residue protein sequence, read N- to C-terminus: uncharacterized protein (238 aa).

The next 6 membrane-spanning stretches (helical) occupy residues 24-44 (IFIA…YMKN), 78-98 (GFLL…LPGL), 109-129 (ILFI…IILV), 156-176 (FILL…IQVI), 188-208 (MYAY…IITP), and 216-236 (IIMS…LKIL).

This sequence belongs to the TatC family.

The protein resides in the plastid. It localises to the chloroplast membrane. This is an uncharacterized protein from Gracilaria tenuistipitata var. liui (Red alga).